The sequence spans 246 residues: Mast cell protease 9 (246 aa).

The first 18 residues, 1 to 18, serve as a signal peptide directing secretion; it reads MQALLFLMALLLPSRAGA. A propeptide spans 19–20 (activation peptide); it reads EE. Residues 21–244 enclose the Peptidase S1 domain; it reads IIGGVESEPH…HVPWINRVIK (224 aa). Cys50 and Cys66 are joined by a disulfide. Residues His65 and Asp109 each act as charge relay system in the active site. Cystine bridges form between Cys143-Cys208 and Cys174-Cys187. Ser202 (charge relay system) is an active-site residue.

It belongs to the peptidase S1 family. Granzyme subfamily. Selectively expressed in uterine mast cells.

The protein is Mast cell protease 9 (Mcpt9) of Mus musculus (Mouse).